Reading from the N-terminus, the 292-residue chain is tRNA dimethylallyltransferase (292 aa).

10–17 provides a ligand contact to ATP; sequence GPTASGKS. A substrate-binding site is contributed by 12-17; it reads TASGKS. Interaction with substrate tRNA regions lie at residues 35 to 38 and 159 to 163; these read DSMQ and QRIVR.

The protein belongs to the IPP transferase family. Monomer. It depends on Mg(2+) as a cofactor.

It carries out the reaction adenosine(37) in tRNA + dimethylallyl diphosphate = N(6)-dimethylallyladenosine(37) in tRNA + diphosphate. Functionally, catalyzes the transfer of a dimethylallyl group onto the adenine at position 37 in tRNAs that read codons beginning with uridine, leading to the formation of N6-(dimethylallyl)adenosine (i(6)A). This is tRNA dimethylallyltransferase from Chelativorans sp. (strain BNC1).